Reading from the N-terminus, the 250-residue chain is Probable 2' cyclic ADP-D-ribose synthase TcpB (250 aa).

Positions 1 to 46 are disordered; the sequence is MSKEKQAQSKAHKAQQAISSAKSLSTQKSKMSELERATRDGAAIGK. The segment at 1–117 is necessary and sufficient for phosphoinositide binding; that stretch reads MSKEKQAQSK…TASATMEAEE (117 aa). Low complexity predominate over residues 14–23; that stretch reads AQQAISSAKS. Basic and acidic residues predominate over residues 30–39; that stretch reads KMSELERATR. The region spanning 117 to 250 is the TIR domain; the sequence is EEYDFFISHA…EIAKELHSLI (134 aa). Glu-192 is a catalytic residue.

In terms of assembly, homodimer; may also form oligomers. Interacts with host TIRAP. Interacts with host MYD88. Interaction with host MYD88 was not confirmed by another study. Interacts with host TLR4. Abolishes the interaction of host TIRAP with TLR4.

Its subcellular location is the secreted. It is found in the host cell membrane. The catalysed reaction is NAD(+) + H2O = ADP-D-ribose + nicotinamide + H(+). The enzyme catalyses NAD(+) = 2'cADPR + nicotinamide + H(+). Functionally, virulence factor that interferes with host Toll-like receptor 2 (TLR2) and TLR4 signaling, resulting in the reduction of dendritic cell maturation, inhibition of pro-inflammatory cytokine secretion and impaired NF-kappa-B activation in macrophages. Interferes with host TLR4 signaling by abolishing host TLR4-TIRAP interaction (but not host TIRAP-MYD88 interaction) and its downstream signaling. Inhibits host TLR 2 induced NF-kappa-B activation and TNF (tumor necrosis factor) secretion. Binds phosphoinositide (PtdIns) via its N-terminal domain. Has NAD(+) hydrolase (NADase) activity, catalyzes cleavage of NAD(+) into ADP-D-ribose (ADPR) and nicotinamide. Also generates a cyclization variant of cyclic ADPR (cADPR), termed v-cADPR (probably 2'cADPR). In Brucella melitensis biotype 1 (strain ATCC 23456 / CCUG 17765 / NCTC 10094 / 16M), this protein is Probable 2' cyclic ADP-D-ribose synthase TcpB.